We begin with the raw amino-acid sequence, 309 residues long: ADP,ATP carrier protein 1 (309 aa).

Solcar repeat units follow at residues 11-104, 116-208, and 216-302; these read SHFG…IKSL, KWFA…FKPV, and GSFV…LQLI. Helical transmembrane passes span 13–40, 81–105, 114–134, 184–205, and 219–239; these read FGVD…VKLL, TANV…KSLL, YAKW…LSLL, FVPS…YDSF, and VASF…SYPL. Residues Arg-86 and Lys-98 each coordinate ADP. Residue Arg-243 coordinates ADP. The interval 243–248 is important for transport activity; sequence RRRMMM. Positions 243–248 match the Nucleotide carrier signature motif motif; the sequence is RRRMMM. A helical transmembrane segment spans residues 279-299; the sequence is CGANIFRGVAAAGVISLYDQL.

The protein belongs to the mitochondrial carrier (TC 2.A.29) family. In terms of assembly, monomer.

It is found in the mitochondrion inner membrane. It carries out the reaction ADP(in) + ATP(out) = ADP(out) + ATP(in). The matrix-open state (m-state) is inhibited by the membrane-permeable bongkrekic acid (BKA). The cytoplasmic-open state (c-state) is inhibited by the membrane-impermeable toxic inhibitor carboxyatractyloside (CATR). ADP:ATP antiporter that mediates import of ADP into the mitochondrial matrix for ATP synthesis, and export of ATP out to fuel the cell. Cycles between the cytoplasmic-open state (c-state) and the matrix-open state (m-state): operates by the alternating access mechanism with a single substrate-binding site intermittently exposed to either the cytosolic (c-state) or matrix (m-state) side of the inner mitochondrial membrane. This Saccharomyces cerevisiae (strain ATCC 204508 / S288c) (Baker's yeast) protein is ADP,ATP carrier protein 1 (AAC1).